A 249-amino-acid chain; its full sequence is V-type proton ATPase subunit D 2 (249 aa).

This sequence belongs to the V-ATPase D subunit family. As to quaternary structure, V-ATPase is a heteromultimeric enzyme made up of two complexes: the ATP-hydrolytic V1 complex and the proton translocation V0 complex. The V1 complex consists of three catalytic AB heterodimers that form a heterohexamer, three peripheral stalks each consisting of EG heterodimers, one central rotor including subunits D and F, and the regulatory subunits C and H. The proton translocation complex V0 consists of the proton transport subunit a, a ring of proteolipid subunits c9c'', rotary subunit d, subunits e and f, and the accessory subunits VhaAC45 and ATP6AP2.

Its function is as follows. Subunit of the V1 complex of vacuolar(H+)-ATPase (V-ATPase), a multisubunit enzyme composed of a peripheral complex (V1) that hydrolyzes ATP and a membrane integral complex (V0) that translocates protons. V-ATPase is responsible for acidifying and maintaining the pH of intracellular compartments and in some cell types, is targeted to the plasma membrane, where it is responsible for acidifying the extracellular environment. This is V-type proton ATPase subunit D 2 (Vha36-3) from Drosophila melanogaster (Fruit fly).